The chain runs to 294 residues: tRNA dimethylallyltransferase (294 aa).

Position 10 to 17 (10 to 17) interacts with ATP; that stretch reads GPTAVGKT. 12-17 is a substrate binding site; it reads TAVGKT. Positions 35 to 38 are interaction with substrate tRNA; it reads DSQQ.

The protein belongs to the IPP transferase family. In terms of assembly, monomer. The cofactor is Mg(2+).

It catalyses the reaction adenosine(37) in tRNA + dimethylallyl diphosphate = N(6)-dimethylallyladenosine(37) in tRNA + diphosphate. Functionally, catalyzes the transfer of a dimethylallyl group onto the adenine at position 37 in tRNAs that read codons beginning with uridine, leading to the formation of N6-(dimethylallyl)adenosine (i(6)A). This Streptococcus sanguinis (strain SK36) protein is tRNA dimethylallyltransferase.